The chain runs to 158 residues: S-ribosylhomocysteine lyase (158 aa).

3 residues coordinate Fe cation: His-55, His-59, and Cys-127.

Belongs to the LuxS family. As to quaternary structure, homodimer. Fe cation serves as cofactor.

The enzyme catalyses S-(5-deoxy-D-ribos-5-yl)-L-homocysteine = (S)-4,5-dihydroxypentane-2,3-dione + L-homocysteine. Functionally, involved in the synthesis of autoinducer 2 (AI-2) which is secreted by bacteria and is used to communicate both the cell density and the metabolic potential of the environment. The regulation of gene expression in response to changes in cell density is called quorum sensing. Catalyzes the transformation of S-ribosylhomocysteine (RHC) to homocysteine (HC) and 4,5-dihydroxy-2,3-pentadione (DPD). This Geobacillus thermodenitrificans (strain NG80-2) protein is S-ribosylhomocysteine lyase.